We begin with the raw amino-acid sequence, 166 residues long: Probable RNA-binding protein EIF1AD (166 aa).

Residues 5–89 (TKRKHVVKEV…VKAEISFVLC (85 aa)) form the S1-like domain. A Nuclear localization signal motif is present at residues 6-12 (KRKHVVK). Position 33 is a phosphothreonine (Thr-33). A Nuclear localization signal motif is present at residues 56–65 (KYRKNIWIKR). The tract at residues 99 to 166 (DGHWPEAFSQ…EEESEEEEAA (68 aa)) is disordered. Residues 110 to 119 (TEKDNNDRNR) are compositionally biased toward basic and acidic residues. Phosphoserine is present on residues Ser-132, Ser-136, Ser-137, Ser-138, Ser-156, and Ser-160. Acidic residues predominate over residues 156-166 (SEEESEEEEAA).

Belongs to the EIF1AD family. As to quaternary structure, interacts with GAPDH and STAT1.

It localises to the nucleus. In terms of biological role, plays a role into cellular response to oxidative stress. Decreases cell proliferation. This chain is Probable RNA-binding protein EIF1AD (EIF1AD), found in Bos taurus (Bovine).